The chain runs to 103 residues: Small ribosomal subunit protein uS10 (103 aa).

This sequence belongs to the universal ribosomal protein uS10 family. Part of the 30S ribosomal subunit.

In terms of biological role, involved in the binding of tRNA to the ribosomes. The sequence is that of Small ribosomal subunit protein uS10 from Fusobacterium nucleatum subsp. nucleatum (strain ATCC 25586 / DSM 15643 / BCRC 10681 / CIP 101130 / JCM 8532 / KCTC 2640 / LMG 13131 / VPI 4355).